The chain runs to 165 residues: E3 ubiquitin-protein ligase RNF181 (165 aa).

The RING-type; atypical zinc-finger motif lies at 88-129 (CPVCLLEFEEEETVIEMPCHHLFHSNCILPWLSKTNSCPLCR). The interval 136–165 (DDSYEEHKKDKARRQQQQHRLENLHGAMYT) is disordered. Position 165 is a phosphothreonine (threonine 165).

It belongs to the RNF181 family. Directly interacts with ITGA2B and, as a result, with integrin ITGA2B/ITGB3. There is no evidence that integrin ITGA2B/ITGB3 is an endogenous substrate for RNF181-directed ubiquitination. Auto-ubiquitinated as part of the enzymatic reaction.

The enzyme catalyses S-ubiquitinyl-[E2 ubiquitin-conjugating enzyme]-L-cysteine + [acceptor protein]-L-lysine = [E2 ubiquitin-conjugating enzyme]-L-cysteine + N(6)-ubiquitinyl-[acceptor protein]-L-lysine.. It functions in the pathway protein modification; protein ubiquitination. In terms of biological role, E3 ubiquitin-protein ligase which accepts ubiquitin from an E2 ubiquitin-conjugating enzyme in the form of a thioester and then directly transfers the ubiquitin to targeted substrates. Catalyzes monoubiquitination of 26S proteasome subunit PSMC2/RPT1. This is E3 ubiquitin-protein ligase RNF181 (Rnf181) from Rattus norvegicus (Rat).